An 861-amino-acid chain; its full sequence is Probable beta-glucosidase A (861 aa).

An N-terminal signal peptide occupies residues 1 to 19 (MKLSILEAAALTAASVVSA). N-linked (GlcNAc...) asparagine glycosylation is found at N62, N212, and N253. D281 is an active-site residue. 8 N-linked (GlcNAc...) asparagine glycosylation sites follow: N316, N323, N355, N524, N543, N565, N669, and N713. The interval 735–754 (PEGATDGSPQPRLPASGGPG) is disordered.

It belongs to the glycosyl hydrolase 3 family.

It localises to the secreted. The enzyme catalyses Hydrolysis of terminal, non-reducing beta-D-glucosyl residues with release of beta-D-glucose.. It participates in glycan metabolism; cellulose degradation. Beta-glucosidases are one of a number of cellulolytic enzymes involved in the degradation of cellulosic biomass. Catalyzes the last step releasing glucose from the inhibitory cellobiose. The chain is Probable beta-glucosidase A (bglA) from Aspergillus terreus (strain NIH 2624 / FGSC A1156).